A 358-amino-acid polypeptide reads, in one-letter code: Methylthioribose-1-phosphate isomerase (358 aa).

Substrate contacts are provided by residues 54–56 (RGA), R96, and Q205. Catalysis depends on D246, which acts as the Proton donor. 256-257 (NK) is a binding site for substrate.

It belongs to the eIF-2B alpha/beta/delta subunits family. MtnA subfamily.

It catalyses the reaction 5-(methylsulfanyl)-alpha-D-ribose 1-phosphate = 5-(methylsulfanyl)-D-ribulose 1-phosphate. Its pathway is amino-acid biosynthesis; L-methionine biosynthesis via salvage pathway; L-methionine from S-methyl-5-thio-alpha-D-ribose 1-phosphate: step 1/6. Catalyzes the interconversion of methylthioribose-1-phosphate (MTR-1-P) into methylthioribulose-1-phosphate (MTRu-1-P). The polypeptide is Methylthioribose-1-phosphate isomerase (Pseudomonas paraeruginosa (strain DSM 24068 / PA7) (Pseudomonas aeruginosa (strain PA7))).